A 438-amino-acid chain; its full sequence is Probable 26S proteasome regulatory subunit rpn-6.1 (438 aa).

Residues 1–10 show a composition bias toward basic and acidic residues; that stretch reads MRETSSREDT. A disordered region spans residues 1–30; that stretch reads MRETSSREDTNNIGKAPEMSGGTIMDTMTS. The 170-residue stretch at 239–408 folds into the PCI domain; the sequence is DFKTAFSYFY…GMLIVFEIAV (170 aa).

The protein belongs to the proteasome subunit S9 family. Component of the lid subcomplex of the 19S proteasome regulatory particle complex (also named PA700 complex). The 26S proteasome consists of a 20S proteasome core and two 19S regulatory subunits.

Functionally, component of the lid subcomplex of the 26S proteasome, a multiprotein complex involved in the ATP-dependent degradation of ubiquitinated proteins. In the complex, rpn-6.1 is required for proteasome assembly. Plays a key role in increased proteasome activity in response to proteotoxic stress: induced by daf-16, promoting enhanced assembly of the 26S proteasome and higher proteasome activity, leading to extended lifespan. The chain is Probable 26S proteasome regulatory subunit rpn-6.1 from Caenorhabditis elegans.